The sequence spans 548 residues: Chaperonin GroEL (548 aa).

ATP is bound by residues 30-33 (TLGP), lysine 51, 87-91 (DGTTT), glycine 415, 479-481 (NAA), and aspartate 495.

It belongs to the chaperonin (HSP60) family. As to quaternary structure, forms a cylinder of 14 subunits composed of two heptameric rings stacked back-to-back. Interacts with the co-chaperonin GroES.

The protein localises to the cytoplasm. The catalysed reaction is ATP + H2O + a folded polypeptide = ADP + phosphate + an unfolded polypeptide.. In terms of biological role, together with its co-chaperonin GroES, plays an essential role in assisting protein folding. The GroEL-GroES system forms a nano-cage that allows encapsulation of the non-native substrate proteins and provides a physical environment optimized to promote and accelerate protein folding. In Serratia proteamaculans (strain 568), this protein is Chaperonin GroEL.